Consider the following 338-residue polypeptide: Holliday junction branch migration complex subunit RuvB (338 aa).

Residues 4–184 (SDRLVSGKAR…FGISHHLQYY (181 aa)) form a large ATPase domain (RuvB-L) region. ATP is bound by residues Arg24, Gly65, Lys68, Thr69, Thr70, 131 to 133 (EDY), Arg174, Tyr184, and Arg221. A Mg(2+)-binding site is contributed by Thr69. The interval 185-255 (HHDELTQIVM…LADEALELLA (71 aa)) is small ATPAse domain (RuvB-S). A head domain (RuvB-H) region spans residues 258 to 338 (HLGFDALDRR…NIEVPDGRNS (81 aa)). Residues Arg294, Arg313, and Arg318 each coordinate DNA.

The protein belongs to the RuvB family. Homohexamer. Forms an RuvA(8)-RuvB(12)-Holliday junction (HJ) complex. HJ DNA is sandwiched between 2 RuvA tetramers; dsDNA enters through RuvA and exits via RuvB. An RuvB hexamer assembles on each DNA strand where it exits the tetramer. Each RuvB hexamer is contacted by two RuvA subunits (via domain III) on 2 adjacent RuvB subunits; this complex drives branch migration. In the full resolvosome a probable DNA-RuvA(4)-RuvB(12)-RuvC(2) complex forms which resolves the HJ.

The protein localises to the cytoplasm. The catalysed reaction is ATP + H2O = ADP + phosphate + H(+). Its function is as follows. The RuvA-RuvB-RuvC complex processes Holliday junction (HJ) DNA during genetic recombination and DNA repair, while the RuvA-RuvB complex plays an important role in the rescue of blocked DNA replication forks via replication fork reversal (RFR). RuvA specifically binds to HJ cruciform DNA, conferring on it an open structure. The RuvB hexamer acts as an ATP-dependent pump, pulling dsDNA into and through the RuvAB complex. RuvB forms 2 homohexamers on either side of HJ DNA bound by 1 or 2 RuvA tetramers; 4 subunits per hexamer contact DNA at a time. Coordinated motions by a converter formed by DNA-disengaged RuvB subunits stimulates ATP hydrolysis and nucleotide exchange. Immobilization of the converter enables RuvB to convert the ATP-contained energy into a lever motion, pulling 2 nucleotides of DNA out of the RuvA tetramer per ATP hydrolyzed, thus driving DNA branch migration. The RuvB motors rotate together with the DNA substrate, which together with the progressing nucleotide cycle form the mechanistic basis for DNA recombination by continuous HJ branch migration. Branch migration allows RuvC to scan DNA until it finds its consensus sequence, where it cleaves and resolves cruciform DNA. This is Holliday junction branch migration complex subunit RuvB from Dichelobacter nodosus (strain VCS1703A).